The chain runs to 348 residues: Erlin-1 (348 aa).

Topologically, residues 1–7 are cytoplasmic; that stretch reads MNMTQAR. Residues 8 to 28 traverse the membrane as a helical segment; sequence VLVAAVVGLVAVLLYASIHKI. Residues 29–348 are Lumenal-facing; it reads EEGHLAVYYR…NVIQNKESTG (320 aa). The N-linked (GlcNAc...) asparagine glycan is linked to Asn-108. Lys-269 bears the N6-acetyllysine mark. The tract at residues 325–348 is disordered; sequence SSLPSKEALEPSGENVIQNKESTG. Over residues 339–348 the composition is skewed to polar residues; that stretch reads NVIQNKESTG.

This sequence belongs to the band 7/mec-2 family. As to quaternary structure, forms a heteromeric complex with ERLIN2. In complex with ERLIN2, interacts with RNF170. Interacts with AMFR and SYVN1. Deubiquitinated by USP25; leading to stabilization. In terms of tissue distribution, expressed in heart, placenta, liver, kidney, pancreas, prostate, testis, ovary and small intestine.

The protein resides in the endoplasmic reticulum membrane. Functionally, component of the ERLIN1/ERLIN2 complex which mediates the endoplasmic reticulum-associated degradation (ERAD) of inositol 1,4,5-trisphosphate receptors (IP3Rs). Involved in regulation of cellular cholesterol homeostasis by regulation the SREBP signaling pathway. Binds cholesterol and may promote ER retention of the SCAP-SREBF complex. In terms of biological role, (Microbial infection) Required early in hepatitis C virus (HCV) infection to initiate RNA replication, and later in the infection to support infectious virus production. The polypeptide is Erlin-1 (Homo sapiens (Human)).